The primary structure comprises 711 residues: Polyribonucleotide nucleotidyltransferase (711 aa).

Mg(2+) contacts are provided by aspartate 486 and aspartate 492. In terms of domain architecture, KH spans 553–612 (PRIHTIKISTDKIKDVIGKGGSVIRALTEETGTTIEIEDDGTVKIAATDGEKAKYAIRRI). An S1 motif domain is found at 622 to 690 (GRIYNGKVTR…RQGRVRLSIK (69 aa)). Residues 690-711 (KEATEQSQPAAAPEAPASEQAE) are disordered. Residues 694 to 711 (EQSQPAAAPEAPASEQAE) are compositionally biased toward low complexity.

The protein belongs to the polyribonucleotide nucleotidyltransferase family. In terms of assembly, component of the RNA degradosome, which is a multiprotein complex involved in RNA processing and mRNA degradation. Mg(2+) serves as cofactor.

The protein localises to the cytoplasm. It carries out the reaction RNA(n+1) + phosphate = RNA(n) + a ribonucleoside 5'-diphosphate. Its function is as follows. Involved in mRNA degradation. Catalyzes the phosphorolysis of single-stranded polyribonucleotides processively in the 3'- to 5'-direction. The protein is Polyribonucleotide nucleotidyltransferase of Salmonella choleraesuis (strain SC-B67).